The chain runs to 464 residues: Centrosomal protein of 55 kDa (464 aa).

Over residues 1–11 (MSSRSTKDLIK) the composition is skewed to basic and acidic residues. Residues 1 to 26 (MSSRSTKDLIKSKWGSKPSNSKSETT) form a disordered region. 3 coiled-coil regions span residues 22-186 (KSET…QWLV), 238-337 (NDLL…FLYT), and 374-403 (QHQL…LHEF). A Phosphoserine modification is found at Ser96. The interval 157 to 236 (PNCFNSSINN…GYLQEEKQKC (80 aa)) is interaction with TSG101. Residues 160–214 (FNSSINNIHEMEIQLKDALEKNQQWLVYDQQREVYVKGLLAKIFELEKKTETAAH) form an interaction with PDCD6IP region. The segment at 355–464 (QMQACTLDFE…LLVHVEYCSK (110 aa)) is required for localization to the interphase centrosome and to the midbody during cytokinesis. Phosphoserine; by CDK1 and MAPK1 is present on residues Ser425 and Ser428. At Thr430 the chain carries Phosphothreonine. Ser436 is subject to Phosphoserine; by PLK1.

Homodimer. Interacts (phosphorylated on Ser-425 and Ser-428) with PLK1; the interaction is indirect via the MTMR3:MTMR4 heterooligomer, occurs during early mitosis, regulates the phosphorylation of CEP55 by PLK1 and its recruitment to the midbody where it can mediate cell abscission. Interacts with AKAP9/CG-NAP; the interaction occurs in interphase and is lost upon mitotic entry. Interacts with PCNT/Kendrin; the interaction occurs in interphase and is lost upon mitotic entry. Directly interacts with PDCD6IP; this interaction is required for PDCD6IP targeting to the midbody; CEP55 binds PDCD6IP in a 2:1 stoichiometry; PDCD6IP competes with TSG101 for the same binding site. Interacts with TSG101; TSG101 competes with PDCD6IP for the same binding site; interaction is required for cytokinesis but not for viral budding. Interacts with MVB12A, VPS37B, VPS37C and VPS28. There is a hierachy of phosphorylation, where both Ser-425 and Ser-428 are phosphorylated at the onset of mitosis, prior to Ser-436. Phosphorylation at Ser-425 and Ser-428 is required for dissociation from the centrosome at the G2/M boundary. Phosphorylation at the 3 sites, Ser-425, Ser-428 and Ser-436, is required for protein function at the final stages of cell division to complete cytokinesis successfully. Expressed in embryonic brain. Expressed in fetal brain ganglionic eminence, kidney tubules and multinucleate neurons in the temporal cortex. Expressed in adult brain, cerebellum, kidney tubules, intestine and muscles (at protein level). Widely expressed, mostly in proliferative tissues. Highly expressed in testis. Intermediate levels in adult and fetal thymus, as well as in various cancer cell lines. Low levels in different parts of the digestive tract, bone marrow, lymph nodes, placenta, fetal heart and fetal spleen. Hardly detected in brain.

Its subcellular location is the cytoplasm. The protein resides in the cytoskeleton. The protein localises to the microtubule organizing center. It localises to the centrosome. It is found in the centriole. Its subcellular location is the cleavage furrow. The protein resides in the midbody. The protein localises to the midbody ring. Its function is as follows. Plays a role in mitotic exit and cytokinesis. Recruits PDCD6IP and TSG101 to midbody during cytokinesis. Required for successful completion of cytokinesis. Not required for microtubule nucleation. Plays a role in the development of the brain and kidney. The sequence is that of Centrosomal protein of 55 kDa from Homo sapiens (Human).